The chain runs to 428 residues: Sialidase-3 (428 aa).

Positions 24 to 27 (YRIP) match the FRIP motif motif. Arg-25 and Arg-45 together coordinate substrate. Asp-50 functions as the Proton acceptor in the catalytic mechanism. One copy of the BNR 1 repeat lies at 129-140 (IYSQDAGCSWSE). Residues Tyr-179 and Tyr-181 each coordinate substrate. The stretch at 203 to 214 (IYSDDLGVTWHH) is one BNR 2 repeat. Residues Glu-225 and Arg-245 each contribute to the substrate site. A BNR 3 repeat occupies 254–265 (ALSTDHGEGFQR). Residues 294 to 318 (RCQDSSSKDAPTIQQSSPGSSLRLE) form a disordered region. Residues 301 to 313 (KDAPTIQQSSPGS) show a composition bias toward polar residues. Residue Ser-313 is modified to Phosphoserine. A substrate-binding site is contributed by Arg-340. Tyr-370 functions as the Nucleophile in the catalytic mechanism. Glu-387 is a catalytic residue.

It belongs to the glycosyl hydrolase 33 family. As to quaternary structure, interacts with CAV1; this interaction enhances NEU3 sialidase activity within caveola. Interacts with EGFR; this interaction mediates desialylation of EGFR and enhances downstream signaling. Palmitoylated; may regulate intracellular trafficking and anchorage to plasma membrane and endomembranes. In terms of tissue distribution, highly expressed in skeletal muscle, testis, adrenal gland and thymus, followed by pancreas, liver, heart and thymus. Weakly expressed in kidney, placenta, brain and lung.

It is found in the cell membrane. It localises to the membrane. The protein resides in the caveola. The protein localises to the early endosome membrane. Its subcellular location is the recycling endosome membrane. It is found in the lysosome membrane. The enzyme catalyses Hydrolysis of alpha-(2-&gt;3)-, alpha-(2-&gt;6)-, alpha-(2-&gt;8)- glycosidic linkages of terminal sialic acid residues in oligosaccharides, glycoproteins, glycolipids, colominic acid and synthetic substrates.. It carries out the reaction a ganglioside GD1a + H2O = a ganglioside GM1 + N-acetylneuraminate. It catalyses the reaction a ganglioside GD1a (d18:1(4E)) + H2O = a ganglioside GM1 (d18:1(4E)) + N-acetylneuraminate. The catalysed reaction is a ganglioside GD1b + H2O = a ganglioside GM1 + N-acetylneuraminate. The enzyme catalyses a ganglioside GD1b (d18:1(4E)) + H2O = a ganglioside GM1 (d18:1(4E)) + N-acetylneuraminate. It carries out the reaction a ganglioside GD3 + H2O = a ganglioside GM3 + N-acetylneuraminate. It catalyses the reaction a ganglioside GD3 (d18:1(4E)) + H2O = a ganglioside GM3 (d18:1(4E)) + N-acetylneuraminate. The catalysed reaction is a ganglioside GM3 + H2O = a beta-D-galactosyl-(1-&gt;4)-beta-D-glucosyl-(1&lt;-&gt;1)-ceramide + N-acetylneuraminate. The enzyme catalyses a ganglioside GM1 + H2O = a ganglioside GA1 + N-acetylneuraminate. It carries out the reaction a ganglioside GM1 (d18:1(4E)) + H2O = a ganglioside GA1 (d18:1(4E)) + N-acetylneuraminate. It catalyses the reaction a ganglioside GM2 (d18:1(4E)) + H2O = a ganglioside GA2 (d18:1(4E)) + N-acetylneuraminate. The catalysed reaction is a ganglioside GM3 (d18:1(4E)) + H2O = a beta-D-Gal-(1-&gt;4)-beta-D-Glc-(1&lt;-&gt;1)-Cer(d18:1(4E)) + N-acetylneuraminate. The enzyme catalyses a ganglioside GT1b + H2O = a ganglioside GD1b + N-acetylneuraminate. Functionally, exo-alpha-sialidase that catalyzes the hydrolytic cleavage of the terminal sialic acid (N-acetylneuraminic acid, Neu5Ac) of a glycan moiety in the catabolism of glycolipids, glycoproteins and oligosacharides. Displays high catalytic efficiency for gangliosides including alpha-(2-&gt;3)-sialylated GD1a and GM3 and alpha-(2-&gt;8)-sialylated GD3. Plays a role in the regulation of transmembrane signaling through the modulation of ganglioside content of the lipid bilayer and by direct interaction with signaling receptors, such as EGFR. Desialylates EGFR and activates downstream signaling in proliferating cells. Contributes to clathrin-mediated endocytosis by regulating sorting of endocytosed receptors to early and recycling endosomes. This chain is Sialidase-3 (NEU3), found in Homo sapiens (Human).